A 321-amino-acid polypeptide reads, in one-letter code: Nucleotide-binding protein LI0459 (321 aa).

ATP is bound at residue 41-48; it reads GMSGAGKS.

It belongs to the RapZ-like family.

Its function is as follows. Displays ATPase and GTPase activities. The sequence is that of Nucleotide-binding protein LI0459 from Lawsonia intracellularis (strain PHE/MN1-00).